Reading from the N-terminus, the 373-residue chain is MNMINYECKMQKIKLKTNLLNFDLQSMKKFFCSIGELEFRAQQVMKWIYQHYCDDFNKMTNISLQLRKKLSTLCCITPPKFLNHKVSVDGTMKWSVVIGNQCIETVCIPKNQRTTLCISSQLGCSLACSFCLTGQQGFNKNLNVSEIIGQVWYIQKLIYFSKINITNKITNVVLMGMGEPLLNLSNVVHALRIMLDEFGLNMSKNHITLSTAGIVPALKKLHTMIDVSLAVSLHASNNTIRNQLMPINKKYNIESVLCAIKKYLYYSNANKKRVTIEYVMLSGINDAAYHAEELFNLLKSIPHKINLIPWNHFSGSNYICSNDITINNFANILIKKGCIVTIRKIRGYDINAACGQLSGIVFDRKFNKINCIS.

The active-site Proton acceptor is E104. A Radical SAM core domain is found at K110–D349. C117 and C354 are joined by a disulfide. Positions 124, 128, and 131 each coordinate [4Fe-4S] cluster. S-adenosyl-L-methionine is bound by residues G178–E179, S210, S232–H234, and N311. C354 acts as the S-methylcysteine intermediate in catalysis.

The protein belongs to the radical SAM superfamily. RlmN family. Requires [4Fe-4S] cluster as cofactor.

Its subcellular location is the cytoplasm. It carries out the reaction adenosine(2503) in 23S rRNA + 2 reduced [2Fe-2S]-[ferredoxin] + 2 S-adenosyl-L-methionine = 2-methyladenosine(2503) in 23S rRNA + 5'-deoxyadenosine + L-methionine + 2 oxidized [2Fe-2S]-[ferredoxin] + S-adenosyl-L-homocysteine. The catalysed reaction is adenosine(37) in tRNA + 2 reduced [2Fe-2S]-[ferredoxin] + 2 S-adenosyl-L-methionine = 2-methyladenosine(37) in tRNA + 5'-deoxyadenosine + L-methionine + 2 oxidized [2Fe-2S]-[ferredoxin] + S-adenosyl-L-homocysteine. Functionally, specifically methylates position 2 of adenine 2503 in 23S rRNA and position 2 of adenine 37 in tRNAs. m2A2503 modification seems to play a crucial role in the proofreading step occurring at the peptidyl transferase center and thus would serve to optimize ribosomal fidelity. The chain is Dual-specificity RNA methyltransferase RlmN from Buchnera aphidicola subsp. Baizongia pistaciae (strain Bp).